Consider the following 342-residue polypeptide: Protein rough sheath 2 homolog (342 aa).

2 HTH myb-type domains span residues 1-58 and 59-113; these read MQPP…KNYL and RPGI…EKQQ. DNA-binding regions (H-T-H motif) lie at residues 32–58 and 86–109; these read WSLV…KNYL and WKKI…EVFK. A coiled-coil region spans residues 253–304; it reads RRREATEEFEAKMRALREEQAAAVERVEAEYREKMAGLRRDAEAKEQKMAEQ.

It is found in the nucleus. Transcription factor required for normal cell differentiation. May interact with other proteins to repress the knox homeobox genes. This chain is Protein rough sheath 2 homolog (RS2), found in Oryza sativa subsp. japonica (Rice).